The primary structure comprises 881 residues: Squamosa promoter-binding-like protein 1 (881 aa).

The segment at 49 to 69 is disordered; that stretch reads FPLGNSSNSSSSCSDEGNDKK. Residues 53–62 are compositionally biased toward low complexity; sequence NSSNSSSSCS. Residues 96–187 are sufficient and necessary for DNA binding; that stretch reads PAKKTKSGAV…RKTNPEPGAN (92 aa). An SBP-type zinc finger spans residues 103–180; sequence GAVCQVENCE…AGHNKRRRKT (78 aa). Zn(2+) contacts are provided by C106, C111, C128, H131, C147, C150, H154, and C166. The Bipartite nuclear localization signal motif lies at 163 to 179; the sequence is KRSCRRRLAGHNKRRRK. Residues 170 to 179 show a composition bias toward basic residues; the sequence is LAGHNKRRRK. 2 disordered regions span residues 170–193 and 274–358; these read LAGHNKRRRKTNPEPGANGNPSDD and FSAR…EDAQ. A compositionally biased stretch (polar residues) spans 275–284; the sequence is SARQDGTATE. Over residues 285 to 295 the composition is skewed to basic and acidic residues; it reads NRSEKQVKMND. Polar residues predominate over residues 319-338; the sequence is PATSSLDYPSWIHQSSPPQT. Low complexity predominate over residues 339–356; that stretch reads SRNSDSASDQSPSSSSED.

Zn(2+) serves as cofactor.

The protein resides in the nucleus. Its function is as follows. Trans-acting factor that binds specifically to the consensus nucleotide sequence 5'-TNCGTACAA-3' of AP1 promoter. Binds specifically to the 5'-GTAC-3' core sequence. The polypeptide is Squamosa promoter-binding-like protein 1 (SPL1) (Arabidopsis thaliana (Mouse-ear cress)).